The following is a 60-amino-acid chain: Large ribosomal subunit protein bL32 (60 aa).

This sequence belongs to the bacterial ribosomal protein bL32 family.

The chain is Large ribosomal subunit protein bL32 from Borreliella afzelii (strain PKo) (Borrelia afzelii).